The sequence spans 366 residues: Sulfite reductase, dissimilatory-type subunit beta (366 aa).

Residues Cys140, Cys177, Cys178, Cys182, Cys220, Cys241, Cys244, and Cys247 each contribute to the [4Fe-4S] cluster site. Siroheme is bound at residue Cys182. Positions 232 to 262 (KTIKVDVEKCMYCGNCYTMCPGMPLFDPEND) constitute a 4Fe-4S ferredoxin-type domain.

As to quaternary structure, heterotetramer of two alpha and two beta subunits. [4Fe-4S] cluster is required as a cofactor. Siroheme serves as cofactor.

It localises to the membrane. The catalysed reaction is [DsrC protein]-trisulfide + NAD(+) + 3 H2O = [DsrC protein]-dithiol + sulfite + NADH + 3 H(+). Its function is as follows. Catalyzes the reduction of sulfite to sulfide. This is the terminal oxidation reaction in sulfate respiration. The protein is Sulfite reductase, dissimilatory-type subunit beta (dsrB) of Archaeoglobus fulgidus (strain ATCC 49558 / DSM 4304 / JCM 9628 / NBRC 100126 / VC-16).